The sequence spans 495 residues: Glutamate--tRNA ligase (495 aa).

The 'HIGH' region signature appears at 12 to 22 (PSPTGHLHIGN). Residues 259-263 (KLSKR) carry the 'KMSKS' region motif. Residue Lys262 participates in ATP binding.

This sequence belongs to the class-I aminoacyl-tRNA synthetase family. Glutamate--tRNA ligase type 1 subfamily. Monomer.

It localises to the cytoplasm. It carries out the reaction tRNA(Glu) + L-glutamate + ATP = L-glutamyl-tRNA(Glu) + AMP + diphosphate. Catalyzes the attachment of glutamate to tRNA(Glu) in a two-step reaction: glutamate is first activated by ATP to form Glu-AMP and then transferred to the acceptor end of tRNA(Glu). In Pediococcus pentosaceus (strain ATCC 25745 / CCUG 21536 / LMG 10740 / 183-1w), this protein is Glutamate--tRNA ligase.